The chain runs to 177 residues: Small ribosomal subunit protein uS4 (177 aa).

The region spanning 104–166 (RRLQTIVYKK…PTSPFKQHPP (63 aa)) is the S4 RNA-binding domain. The tract at residues 158–177 (TSPFKQHPPTQQGEENVQQA) is disordered. Over residues 165 to 177 (PPTQQGEENVQQA) the composition is skewed to polar residues.

This sequence belongs to the universal ribosomal protein uS4 family. As to quaternary structure, part of the 30S ribosomal subunit. Contacts protein S5. The interaction surface between S4 and S5 is involved in control of translational fidelity.

Its function is as follows. One of the primary rRNA binding proteins, it binds directly to 16S rRNA where it nucleates assembly of the body of the 30S subunit. In terms of biological role, with S5 and S12 plays an important role in translational accuracy. The sequence is that of Small ribosomal subunit protein uS4 from Sulfurisphaera tokodaii (strain DSM 16993 / JCM 10545 / NBRC 100140 / 7) (Sulfolobus tokodaii).